The sequence spans 528 residues: Glutamyl-tRNA(Gln) amidotransferase subunit B, mitochondrial (528 aa).

It belongs to the GatB/GatE family. GatB subfamily. As to quaternary structure, subunit of the heterotrimeric GatFAB amidotransferase (AdT) complex, composed of A, B and F subunits.

It localises to the mitochondrion. It carries out the reaction L-glutamyl-tRNA(Gln) + L-glutamine + ATP + H2O = L-glutaminyl-tRNA(Gln) + L-glutamate + ADP + phosphate + H(+). In terms of biological role, allows the formation of correctly charged Gln-tRNA(Gln) through the transamidation of misacylated Glu-tRNA(Gln) in the mitochondria. The reaction takes place in the presence of glutamine and ATP through an activated gamma-phospho-Glu-tRNA(Gln). This Clavispora lusitaniae (strain ATCC 42720) (Yeast) protein is Glutamyl-tRNA(Gln) amidotransferase subunit B, mitochondrial.